The sequence spans 306 residues: Lipid A biosynthesis lauroyltransferase (306 aa).

The helical transmembrane segment at 17–37 (WLTWLGIGVLWLVVQLPYPVI) threads the bilayer. The HXXXXD motif motif lies at 132-137 (HFLTLE).

This sequence belongs to the LpxL/LpxM/LpxP family. Monomer.

It localises to the cell inner membrane. The catalysed reaction is dodecanoyl-[ACP] + alpha-Kdo-(2-&gt;4)-alpha-Kdo-(2-&gt;6)-lipid IVA (E. coli) = alpha-Kdo-(2-&gt;4)-alpha-Kdo-(2-&gt;6)-(dodecanoyl)-lipid IVA (E. coli) + holo-[ACP]. It participates in glycolipid biosynthesis; KDO(2)-lipid A biosynthesis; KDO(2)-lipid A from CMP-3-deoxy-D-manno-octulosonate and lipid IV(A): step 3/4. The protein operates within bacterial outer membrane biogenesis; lipopolysaccharide biosynthesis. In terms of biological role, catalyzes the transfer of laurate from lauroyl-[acyl-carrier-protein] (ACP) to Kdo(2)-lipid IV(A) to form Kdo(2)-(lauroyl)-lipid IV(A). Has 10 fold selectivity for lauroyl-ACP over myristoyl-ACP. In vitro, can also catalyze a slow second acylation reaction leading to the formation of Kdo(2)-(dilauroyl)-lipid IV(A). This Escherichia coli (strain K12) protein is Lipid A biosynthesis lauroyltransferase.